The following is a 596-amino-acid chain: mRNA export factor mex67 (596 aa).

Residues serine 128, serine 130, and serine 133 each carry the phosphoserine modification. LRR repeat units lie at residues 215–236 (DVIS…TTLA), 241–262 (KLLN…DPWS), and 263–282 (PKTK…PIVT). Positions 283–338 (TFANRAMDYQREMVSRFPKLRLLDGNSINSEIIASQSTVPFPVYQSFFDKVETEQI) constitute an LRRCT domain. An NTF2 domain is found at 338-499 (IVNSFLAAFF…ILIINDLLVI (162 aa)). A TAP-C domain is found at 543–596 (DTRQQIVLKIKAETGLNDYYAHMCCEQNNWDYNSALASFLELKSRNVIPAEAFS).

This sequence belongs to the NXF family. As to quaternary structure, interacts with mlo3 and rae1.

Its subcellular location is the nucleus. The protein localises to the cytoplasm. Its function is as follows. Involved in the export of mRNA from the nucleus to the cytoplasm. This chain is mRNA export factor mex67 (mex67), found in Schizosaccharomyces pombe (strain 972 / ATCC 24843) (Fission yeast).